The sequence spans 444 residues: Signal recognition particle 54 kDa protein (444 aa).

GTP is bound by residues 106–113, 187–191, and 245–248; these read GLQGSGKT, DTAGR, and SKLD.

The protein belongs to the GTP-binding SRP family. SRP54 subfamily. Part of the signal recognition particle protein translocation system, which is composed of SRP and FtsY. Archaeal SRP consists of a 7S RNA molecule of 300 nucleotides and two protein subunits: SRP54 and SRP19.

It localises to the cytoplasm. It catalyses the reaction GTP + H2O = GDP + phosphate + H(+). Functionally, involved in targeting and insertion of nascent membrane proteins into the cytoplasmic membrane. Binds to the hydrophobic signal sequence of the ribosome-nascent chain (RNC) as it emerges from the ribosomes. The SRP-RNC complex is then targeted to the cytoplasmic membrane where it interacts with the SRP receptor FtsY. The chain is Signal recognition particle 54 kDa protein from Methanosphaera stadtmanae (strain ATCC 43021 / DSM 3091 / JCM 11832 / MCB-3).